The primary structure comprises 730 residues: PWWP domain-containing protein 2A (730 aa).

The span at 1-15 shows a compositional bias: low complexity; the sequence is MAAVAAEAAATAASP. The interval 1 to 134 is disordered; the sequence is MAAVAAEAAA…PPAGGDSAVS (134 aa). The span at 66 to 77 shows a compositional bias: pro residues; it reads PLPPPPPPPPPG. Phosphoserine occurs at positions 82 and 99. Pro residues predominate over residues 91-108; it reads PEPAAVPVSPPEQPPAAP. The interaction with HDAC1 and MTA1 stretch occupies residues 128 to 346; sequence GGDSAVSHLI…KLKTDHKVDG (219 aa). Lys188 participates in a covalent cross-link: Glycyl lysine isopeptide (Lys-Gly) (interchain with G-Cter in SUMO2). Disordered stretches follow at residues 257-276, 311-355, and 409-531; these read YNQS…KRKM, IRKG…SQRR, and KEKA…LGKK. A compositionally biased stretch (basic residues) spans 267 to 276; that stretch reads RKIKRPKRKM. 2 stretches are compositionally biased toward basic and acidic residues: residues 311 to 329 and 341 to 354; these read IRKG…RRND and DHKV…ESQR. Residues 396–547 are interaction with the H2A.Z/H2AZ1; sequence MDHAKAREVL…SVYLTLNQET (152 aa). Positions 488 to 501 are enriched in low complexity; the sequence is SAGEAPSEKPSPSE. Basic and acidic residues predominate over residues 512-527; sequence DTSRVRVPGEQEELRM. The PWWP domain occupies 630–690; that stretch reads VGDIVWAKIY…LSQLSPFLEN (61 aa).

Component of a MTA1-specific subcomplex of the NuRD complex (M1HR), which is composed of PWWP2A, MTA1/2, HDAC1/2, and RBBP4/7 but does not contain CHD4 and MBD3. Interacts with MTA1; the interaction mediates the association of PWWP2A with the M1HR complex. Interacts with H2A.Z/H2AZ1. Interacts (via PWWP domain) with histone H3 trimethylated at 'Lys-36' (H3K36me3). Does not interact with CHD4 and MBD3.

Its subcellular location is the nucleus. In terms of biological role, chromatin-binding protein that acts as an adapter between distinct nucleosome components (H3K36me3 or H2A.Z) and chromatin-modifying complexes, contributing to the regulation of the levels of histone acetylation at actively transcribed genes. Competes with CHD4 and MBD3 for interaction with MTA1 to form a NuRD subcomplex, preventing the formation of full NuRD complex (containing CHD4 and MBD3), leading to recruitment of HDACs to gene promoters resulting in turn in the deacetylation of nearby H3K27 and H2A.Z. Plays a role in facilitating transcriptional elongation and repression of spurious transcription initiation through regulation of histone acetylation. Essential for proper mitosis progression. The polypeptide is PWWP domain-containing protein 2A (Pwwp2a) (Mus musculus (Mouse)).